The primary structure comprises 355 residues: Guanine nucleotide-binding protein G(z) subunit alpha (355 aa).

The segment covering M1–R14 has biased composition (basic and acidic residues). The disordered stretch occupies residues M1–E26. G2 carries the N-myristoyl glycine lipid modification. C3 carries the S-palmitoyl cysteine lipid modification. The G-alpha domain maps to R32–C355. The tract at residues K35 to T48 is G1 motif. Residues G40–S47, L176–T182, D201–Q205, N270–D273, and A327 contribute to the GTP site. 2 residues coordinate Mg(2+): S47 and T182. The G2 motif stretch occupies residues D174–T182. The tract at residues F197–R206 is G3 motif. The interval I266–D273 is G4 motif. The segment at T325–T330 is G5 motif.

The protein belongs to the G-alpha family. G(i/o/t/z) subfamily. In terms of assembly, G-proteins are composed of 3 units; alpha, beta and gamma. The alpha chain contains the guanine nucleotide binding site. Interacts with ADGRB2.

It localises to the membrane. Functionally, guanine nucleotide-binding proteins (G proteins) are involved as modulators or transducers in various transmembrane signaling systems. This Rattus norvegicus (Rat) protein is Guanine nucleotide-binding protein G(z) subunit alpha (Gnaz).